A 1112-amino-acid polypeptide reads, in one-letter code: Plasma membrane calcium-transporting ATPase 2 (1112 aa).

At 1 to 94 (MGDMSNSDFY…NLIPPKKPKT (94 aa)) the chain is on the cytoplasmic side. A helical transmembrane segment spans residues 95 to 115 (FLQLVWEALQDVTLIILEIAA). Over 116-152 (LISLGLSFYHPPGETGGESCGAAAGGVEDEGEADAGW) the chain is Extracellular. The helical transmembrane segment at 153 to 173 (IEGAAILLSVVCVVLVTAFND) threads the bilayer. The Cytoplasmic segment spans residues 174-373 (WSKEKQFRGL…KEKSVLQGKL (200 aa)). Basic and acidic residues predominate over residues 298-311 (EKKEKKGGAVEDGH). The tract at residues 298-363 (EKKEKKGGAV…KERKKVSAPK (66 aa)) is disordered. Residues 312 to 327 (QNTGKMQDGNMESNQI) show a composition bias toward polar residues. Positions 351–363 (ADEKERKKVSAPK) are enriched in basic and acidic residues. Residues 374-393 (TKLAVQIGKAGLLMSAITVI) traverse the membrane as a helical segment. The Extracellular segment spans residues 394 to 426 (ILVLYFAIDNFVMQKRPWMPECTPIYIQYFVKF). The helical transmembrane segment at 427 to 444 (FIIGVTVLVVAVPEGLPL) threads the bilayer. At 445 to 858 (AVTISLAYSV…MWGRNVYDSI (414 aa)) the chain is on the cytoplasmic side. The active-site 4-aspartylphosphate intermediate is the Asp-482. The Mg(2+) site is built by Asp-803 and Asp-807. Residues 859–878 (SKFLQFQLTVNVVAVIVAFT) traverse the membrane as a helical segment. Residues 879–888 (GACITQDSPL) lie on the Extracellular side of the membrane. The chain crosses the membrane as a helical span at residues 889–909 (KAVQMLWVNLIMDTFASLALA). Residues 910–929 (TEPPTESLLKRKPYGRNKPL) lie on the Cytoplasmic side of the membrane. The helical transmembrane segment at 930–952 (ISSTMTKNILGHGVYQLIIIFTL) threads the bilayer. Residues 953-970 (LFVGEQIFDIDSGRNAPL) lie on the Extracellular side of the membrane. Residues 971-992 (HSPPSEHYTIIFNTFVMMQLFN) form a helical membrane-spanning segment. The Cytoplasmic segment spans residues 993–1011 (EINARKIHGERNVFDGIFR). Residues 1012–1033 (NPIFCSIVFGTFAVQIVIVQFG) form a helical membrane-spanning segment. Residues 1034 to 1043 (GKPFSCQPLD) lie on the Extracellular side of the membrane. A helical membrane pass occupies residues 1044 to 1065 (LEKWMWCVFLGLGELVWGQVIA). Residues 1066–1112 (TIPNSRLRFLRRAGQLTQKDELPEEDVNEENEEIDHAERELRRGQIL) are Cytoplasmic-facing. Residues 1086 to 1112 (ELPEEDVNEENEEIDHAERELRRGQIL) are disordered. Over residues 1087–1098 (LPEEDVNEENEE) the composition is skewed to acidic residues. A compositionally biased stretch (basic and acidic residues) spans 1099 to 1112 (IDHAERELRRGQIL). The tract at residues 1106 to 1112 (LRRGQIL) is calmodulin-binding subdomain A.

Belongs to the cation transport ATPase (P-type) (TC 3.A.3) family. Type IIB subfamily.

It localises to the cell membrane. The catalysed reaction is Ca(2+)(in) + ATP + H2O = Ca(2+)(out) + ADP + phosphate + H(+). Its function is as follows. This magnesium-dependent enzyme catalyzes the hydrolysis of ATP coupled with the transport of calcium out of the cell. The protein is Plasma membrane calcium-transporting ATPase 2 (atp2b2) of Oreochromis mossambicus (Mozambique tilapia).